The following is a 473-amino-acid chain: ATP synthase subunit beta (473 aa).

158-165 lines the ATP pocket; that stretch reads GGAGVGKT.

It belongs to the ATPase alpha/beta chains family. As to quaternary structure, F-type ATPases have 2 components, CF(1) - the catalytic core - and CF(0) - the membrane proton channel. CF(1) has five subunits: alpha(3), beta(3), gamma(1), delta(1), epsilon(1). CF(0) has three main subunits: a(1), b(2) and c(9-12). The alpha and beta chains form an alternating ring which encloses part of the gamma chain. CF(1) is attached to CF(0) by a central stalk formed by the gamma and epsilon chains, while a peripheral stalk is formed by the delta and b chains.

Its subcellular location is the cell membrane. The catalysed reaction is ATP + H2O + 4 H(+)(in) = ADP + phosphate + 5 H(+)(out). In terms of biological role, produces ATP from ADP in the presence of a proton gradient across the membrane. The catalytic sites are hosted primarily by the beta subunits. The chain is ATP synthase subunit beta from Bacillus licheniformis (strain ATCC 14580 / DSM 13 / JCM 2505 / CCUG 7422 / NBRC 12200 / NCIMB 9375 / NCTC 10341 / NRRL NRS-1264 / Gibson 46).